A 683-amino-acid chain; its full sequence is Leishmanolysin-like peptidase (683 aa).

A Zn(2+)-binding site is contributed by His-257. Glu-258 is a catalytic residue. 2 residues coordinate Zn(2+): His-261 and His-364.

Belongs to the peptidase M8 family. Requires Zn(2+) as cofactor.

The protein resides in the cytoplasm. Functionally, essential for the coordination of mitotic progression, and also plays a role in cell migration. The sequence is that of Leishmanolysin-like peptidase (Invadolysin) from Drosophila melanogaster (Fruit fly).